The sequence spans 214 residues: Protein verrocchio (214 aa).

In terms of assembly, probably homomultimerizes. Component of the MTV complex, composed of moi/modigliani, tea and ver/verrocchio. Interacts with moi/modigliani and tea (via C-terminus); the interactions are direct and require fully intact moi/modigliani and ver/verrocchio. The MTV complex is recruited to telomeres by the HipHop-HOAP complex, consisting of HipHop, cav/HOAP and Su(var)205/HP1 to form the terminin telomere-capping complex. Interacts with cav/HOAP; the interaction is direct. Interacts with Su(var)205/HP1; the interaction is indirect and probably requires cav/HOAP or moi/modigliani. Probably interacts with peo (via N-terminus and UBC domain).

Its subcellular location is the nucleus. The protein resides in the chromosome. It is found in the telomere. Functionally, part of the MTV complex that associates with the HipHop-HOAP complex to form the terminin telomere-capping complex involved in telomere maintenance and prevention of telomere fusion. As part of the MTV complex binds single stranded DNA in a sequence-independent manner, protecting it from degradation. In Drosophila melanogaster (Fruit fly), this protein is Protein verrocchio.